The primary structure comprises 491 residues: Protein nucleotidyltransferase YdiU (491 aa).

Residues G88, G90, R91, K111, D123, G124, R174, and R181 each contribute to the ATP site. The active-site Proton acceptor is D250. Mg(2+) contacts are provided by N251 and D260. D260 contacts ATP.

The protein belongs to the SELO family. Mg(2+) serves as cofactor. Requires Mn(2+) as cofactor.

It carries out the reaction L-seryl-[protein] + ATP = 3-O-(5'-adenylyl)-L-seryl-[protein] + diphosphate. It catalyses the reaction L-threonyl-[protein] + ATP = 3-O-(5'-adenylyl)-L-threonyl-[protein] + diphosphate. The enzyme catalyses L-tyrosyl-[protein] + ATP = O-(5'-adenylyl)-L-tyrosyl-[protein] + diphosphate. The catalysed reaction is L-histidyl-[protein] + UTP = N(tele)-(5'-uridylyl)-L-histidyl-[protein] + diphosphate. It carries out the reaction L-seryl-[protein] + UTP = O-(5'-uridylyl)-L-seryl-[protein] + diphosphate. It catalyses the reaction L-tyrosyl-[protein] + UTP = O-(5'-uridylyl)-L-tyrosyl-[protein] + diphosphate. Nucleotidyltransferase involved in the post-translational modification of proteins. It can catalyze the addition of adenosine monophosphate (AMP) or uridine monophosphate (UMP) to a protein, resulting in modifications known as AMPylation and UMPylation. The polypeptide is Protein nucleotidyltransferase YdiU (Bradyrhizobium diazoefficiens (strain JCM 10833 / BCRC 13528 / IAM 13628 / NBRC 14792 / USDA 110)).